Consider the following 292-residue polypeptide: MYSSSSIEGNLYGFSEQEPQRAPIGVFDSGVGGLTVLRQIYRQLPNESVIYFGDTARLPYGIRSQAEILTFVRDILDWMQQQHVKMVVMACNTSSALALDIVREEYDFPILGVILPGAKAAVQQGKRIGVISTPATAKSNAYRQAIWEIDPNVEVWQVGCPEFVPLIEQNRIQDPYTTEVARAYLEPLIQQDIDTLVYGCTHYPLLAPVLRSLLPPQVKIIDPAVHVVTACTQELDILGLSNTHPPLPTRFAVSGCPQQFSQSGVNWLGYTPLVEAVDFTGIPVSQLQQDLA.

Residues 28 to 29 and 60 to 61 contribute to the substrate site; these read DS and YG. The Proton donor/acceptor role is filled by Cys91. 92–93 is a substrate binding site; the sequence is NT. Residue Cys200 is the Proton donor/acceptor of the active site. Position 201–202 (201–202) interacts with substrate; the sequence is TH.

It belongs to the aspartate/glutamate racemases family.

It carries out the reaction L-glutamate = D-glutamate. Its pathway is cell wall biogenesis; peptidoglycan biosynthesis. In terms of biological role, provides the (R)-glutamate required for cell wall biosynthesis. The polypeptide is Glutamate racemase (Trichormus variabilis (strain ATCC 29413 / PCC 7937) (Anabaena variabilis)).